The primary structure comprises 40 residues: MITDVQLAIFSNVLGVFLFLLVVAYHYINANTGKPIPKAK.

Residues 1–4 are Lumenal-facing; the sequence is MITD. Residues 5–25 traverse the membrane as a helical segment; the sequence is VQLAIFSNVLGVFLFLLVVAY. The Cytoplasmic segment spans residues 26–40; it reads HYINANTGKPIPKAK.

Belongs to the OST4 family. As to quaternary structure, component of the oligosaccharyltransferase (OST) complex.

Its subcellular location is the endoplasmic reticulum membrane. In terms of biological role, subunit of the oligosaccharyl transferase (OST) complex that catalyzes the initial transfer of a defined glycan (Glc(3)Man(9)GlcNAc(2) in eukaryotes) from the lipid carrier dolichol-pyrophosphate to an asparagine residue within an Asn-X-Ser/Thr consensus motif in nascent polypeptide chains, the first step in protein N-glycosylation. N-glycosylation occurs cotranslationally and the complex associates with the Sec61 complex at the channel-forming translocon complex that mediates protein translocation across the endoplasmic reticulum (ER). All subunits are required for a maximal enzyme activity. The chain is Dolichyl-diphosphooligosaccharide--protein glycosyltransferase subunit 4 from Drosophila ananassae (Fruit fly).